The following is a 279-amino-acid chain: Energy-coupling factor transporter ATP-binding protein EcfA1 (279 aa).

Residues 6 to 240 (LSIEGVSFRY…GSKLERIGLD (235 aa)) form the ABC transporter domain. 40–47 (GHNGSGKS) contacts ATP.

This sequence belongs to the ABC transporter superfamily. Energy-coupling factor EcfA family. In terms of assembly, forms a stable energy-coupling factor (ECF) transporter complex composed of 2 membrane-embedded substrate-binding proteins (S component), 2 ATP-binding proteins (A component) and 2 transmembrane proteins (T component).

Its subcellular location is the cell membrane. ATP-binding (A) component of a common energy-coupling factor (ECF) ABC-transporter complex. Unlike classic ABC transporters this ECF transporter provides the energy necessary to transport a number of different substrates. This Geobacillus kaustophilus (strain HTA426) protein is Energy-coupling factor transporter ATP-binding protein EcfA1.